Here is a 368-residue protein sequence, read N- to C-terminus: UDP-N-acetylglucosamine--N-acetylmuramyl-(pentapeptide) pyrophosphoryl-undecaprenol N-acetylglucosamine transferase (368 aa).

UDP-N-acetyl-alpha-D-glucosamine-binding positions include 10 to 12 (TGG), Asn-128, Arg-170, Ser-199, Ile-250, and Gln-295.

Belongs to the glycosyltransferase 28 family. MurG subfamily.

The protein resides in the cell inner membrane. The catalysed reaction is di-trans,octa-cis-undecaprenyl diphospho-N-acetyl-alpha-D-muramoyl-L-alanyl-D-glutamyl-meso-2,6-diaminopimeloyl-D-alanyl-D-alanine + UDP-N-acetyl-alpha-D-glucosamine = di-trans,octa-cis-undecaprenyl diphospho-[N-acetyl-alpha-D-glucosaminyl-(1-&gt;4)]-N-acetyl-alpha-D-muramoyl-L-alanyl-D-glutamyl-meso-2,6-diaminopimeloyl-D-alanyl-D-alanine + UDP + H(+). The protein operates within cell wall biogenesis; peptidoglycan biosynthesis. Its function is as follows. Cell wall formation. Catalyzes the transfer of a GlcNAc subunit on undecaprenyl-pyrophosphoryl-MurNAc-pentapeptide (lipid intermediate I) to form undecaprenyl-pyrophosphoryl-MurNAc-(pentapeptide)GlcNAc (lipid intermediate II). This is UDP-N-acetylglucosamine--N-acetylmuramyl-(pentapeptide) pyrophosphoryl-undecaprenol N-acetylglucosamine transferase from Chlorobium phaeovibrioides (strain DSM 265 / 1930) (Prosthecochloris vibrioformis (strain DSM 265)).